An 87-amino-acid chain; its full sequence is Stannin (87 aa).

Over 1 to 10 (MSIMDHSPTT) the chain is Mitochondrial intermembrane. Residues 11 to 31 (GVVTVIVILIAIAALGALILG) form a helical membrane-spanning segment. At 32–87 (CWCYLRLQRISQSEDEESIVGDGETKEPFLLVQYSAKGPCVERKAKLTPNGPEVHS) the chain is on the cytoplasmic side. Residue Ser-49 is modified to Phosphoserine.

The protein belongs to the stannin family. In terms of assembly, monomer.

It is found in the mitochondrion outer membrane. In terms of biological role, plays a role in the toxic effects of organotins. Plays a role in endosomal maturation. The sequence is that of Stannin (SNN) from Bos taurus (Bovine).